The sequence spans 362 residues: D-alanine--D-alanine ligase (362 aa).

An ATP-grasp domain is found at 153-357 (KKIAREAGIP…YADLLTTLVS (205 aa)). ATP is bound at residue 180 to 235 (RELLGLPVFVKPARGGSSIGISKVDSWRDLPAAIEEAASHDPKVIIEAMITGPEVE). Residues Asp-312, Glu-324, and Asn-326 each contribute to the Mg(2+) site.

This sequence belongs to the D-alanine--D-alanine ligase family. Mg(2+) serves as cofactor. Mn(2+) is required as a cofactor.

Its subcellular location is the cytoplasm. The enzyme catalyses 2 D-alanine + ATP = D-alanyl-D-alanine + ADP + phosphate + H(+). It participates in cell wall biogenesis; peptidoglycan biosynthesis. Functionally, cell wall formation. This is D-alanine--D-alanine ligase from Corynebacterium urealyticum (strain ATCC 43042 / DSM 7109).